Here is a 450-residue protein sequence, read N- to C-terminus: Ribosomal protein uS12 methylthiotransferase RimO (450 aa).

Residues 9–124 (NRINVVTLGC…LLSALEADYK (116 aa)) form the MTTase N-terminal domain. Positions 18, 53, 87, 148, 152, and 155 each coordinate [4Fe-4S] cluster. Residues 134-365 (TTPKNYAYLK…EIQSQISWEL (232 aa)) form the Radical SAM core domain. In terms of domain architecture, TRAM spans 367-434 (QQKIGEVFNV…DFDLYGEPLN (68 aa)).

This sequence belongs to the methylthiotransferase family. RimO subfamily. [4Fe-4S] cluster is required as a cofactor.

It localises to the cytoplasm. It catalyses the reaction L-aspartate(89)-[ribosomal protein uS12]-hydrogen + (sulfur carrier)-SH + AH2 + 2 S-adenosyl-L-methionine = 3-methylsulfanyl-L-aspartate(89)-[ribosomal protein uS12]-hydrogen + (sulfur carrier)-H + 5'-deoxyadenosine + L-methionine + A + S-adenosyl-L-homocysteine + 2 H(+). Its function is as follows. Catalyzes the methylthiolation of an aspartic acid residue of ribosomal protein uS12. The polypeptide is Ribosomal protein uS12 methylthiotransferase RimO (Christiangramia forsetii (strain DSM 17595 / CGMCC 1.15422 / KT0803) (Gramella forsetii)).